Consider the following 671-residue polypeptide: UvrABC system protein B (671 aa).

The 388-residue stretch at 25–412 (EGIDAGLAHQ…AGRIVEQVVR (388 aa)) folds into the Helicase ATP-binding domain. 38-45 (GVTGSGKT) is a binding site for ATP. Residues 91–114 (YYDYYQPEAYVPSSDTFIEKDASI) carry the Beta-hairpin motif. In terms of domain architecture, Helicase C-terminal spans 429–582 (QVDDLLSEIH…QIAFNLEHGI (154 aa)). Residues 601-624 (PGSRSKKRKGMAKAAEENARYENE) form a disordered region. Basic and acidic residues predominate over residues 614–624 (AAEENARYENE). The UVR domain maps to 632 to 667 (NKRIRQLEEKMYQLARDLEFEAAAQMRDEIGKLRER).

This sequence belongs to the UvrB family. As to quaternary structure, forms a heterotetramer with UvrA during the search for lesions. Interacts with UvrC in an incision complex.

Its subcellular location is the cytoplasm. The UvrABC repair system catalyzes the recognition and processing of DNA lesions. A damage recognition complex composed of 2 UvrA and 2 UvrB subunits scans DNA for abnormalities. Upon binding of the UvrA(2)B(2) complex to a putative damaged site, the DNA wraps around one UvrB monomer. DNA wrap is dependent on ATP binding by UvrB and probably causes local melting of the DNA helix, facilitating insertion of UvrB beta-hairpin between the DNA strands. Then UvrB probes one DNA strand for the presence of a lesion. If a lesion is found the UvrA subunits dissociate and the UvrB-DNA preincision complex is formed. This complex is subsequently bound by UvrC and the second UvrB is released. If no lesion is found, the DNA wraps around the other UvrB subunit that will check the other stand for damage. This is UvrABC system protein B from Pseudomonas syringae pv. syringae (strain B728a).